We begin with the raw amino-acid sequence, 549 residues long: Siroheme synthase (549 aa).

The segment at 1–203 is precorrin-2 dehydrogenase /sirohydrochlorin ferrochelatase; sequence MNTFPLFFKL…GNENEALAQL (203 aa). NAD(+) contacts are provided by residues 22-23 and 43-44; these read DV and PS. Phosphoserine is present on Ser128. Residues 247–549 form a uroporphyrinogen-III C-methyltransferase region; the sequence is GEVYIVGAGP…DGDLEQLIIG (303 aa). Pro256 is an S-adenosyl-L-methionine binding site. Asp279 functions as the Proton acceptor in the catalytic mechanism. Lys301 functions as the Proton donor in the catalytic mechanism. S-adenosyl-L-methionine-binding positions include 332-334, Ile337, 362-363, Met414, and Ala443; these read GGD and TA.

The protein in the N-terminal section; belongs to the precorrin-2 dehydrogenase / sirohydrochlorin ferrochelatase family. This sequence in the C-terminal section; belongs to the precorrin methyltransferase family.

The enzyme catalyses uroporphyrinogen III + 2 S-adenosyl-L-methionine = precorrin-2 + 2 S-adenosyl-L-homocysteine + H(+). It catalyses the reaction precorrin-2 + NAD(+) = sirohydrochlorin + NADH + 2 H(+). It carries out the reaction siroheme + 2 H(+) = sirohydrochlorin + Fe(2+). The protein operates within cofactor biosynthesis; adenosylcobalamin biosynthesis; precorrin-2 from uroporphyrinogen III: step 1/1. It participates in cofactor biosynthesis; adenosylcobalamin biosynthesis; sirohydrochlorin from precorrin-2: step 1/1. Its pathway is porphyrin-containing compound metabolism; siroheme biosynthesis; precorrin-2 from uroporphyrinogen III: step 1/1. It functions in the pathway porphyrin-containing compound metabolism; siroheme biosynthesis; siroheme from sirohydrochlorin: step 1/1. The protein operates within porphyrin-containing compound metabolism; siroheme biosynthesis; sirohydrochlorin from precorrin-2: step 1/1. Functionally, multifunctional enzyme that catalyzes the SAM-dependent methylations of uroporphyrinogen III at position C-2 and C-7 to form precorrin-2 via precorrin-1. Then it catalyzes the NAD-dependent ring dehydrogenation of precorrin-2 to yield sirohydrochlorin. Finally, it catalyzes the ferrochelation of sirohydrochlorin to yield siroheme. The sequence is that of Siroheme synthase from Psychrobacter arcticus (strain DSM 17307 / VKM B-2377 / 273-4).